Here is a 203-residue protein sequence, read N- to C-terminus: Small ribosomal subunit protein uS4 (203 aa).

The S4 RNA-binding domain maps to 93-156; sequence RRLDNVVYRL…LKVPAILEAV (64 aa).

Belongs to the universal ribosomal protein uS4 family. Part of the 30S ribosomal subunit. Contacts protein S5. The interaction surface between S4 and S5 is involved in control of translational fidelity.

Its function is as follows. One of the primary rRNA binding proteins, it binds directly to 16S rRNA where it nucleates assembly of the body of the 30S subunit. Functionally, with S5 and S12 plays an important role in translational accuracy. This chain is Small ribosomal subunit protein uS4, found in Streptococcus sanguinis (strain SK36).